A 350-amino-acid polypeptide reads, in one-letter code: Biotin synthase (350 aa).

The region spanning 41 to 268 (NEVQISRLLS…KSRVRLSAGR (228 aa)) is the Radical SAM core domain. [4Fe-4S] cluster contacts are provided by C56, C60, and C63. [2Fe-2S] cluster is bound by residues C100, C131, C191, and R263.

Belongs to the radical SAM superfamily. Biotin synthase family. As to quaternary structure, homodimer. It depends on [4Fe-4S] cluster as a cofactor. [2Fe-2S] cluster serves as cofactor.

The enzyme catalyses (4R,5S)-dethiobiotin + (sulfur carrier)-SH + 2 reduced [2Fe-2S]-[ferredoxin] + 2 S-adenosyl-L-methionine = (sulfur carrier)-H + biotin + 2 5'-deoxyadenosine + 2 L-methionine + 2 oxidized [2Fe-2S]-[ferredoxin]. The protein operates within cofactor biosynthesis; biotin biosynthesis; biotin from 7,8-diaminononanoate: step 2/2. In terms of biological role, catalyzes the conversion of dethiobiotin (DTB) to biotin by the insertion of a sulfur atom into dethiobiotin via a radical-based mechanism. This is Biotin synthase from Shewanella piezotolerans (strain WP3 / JCM 13877).